The chain runs to 210 residues: DNA-directed RNA polymerases I, II, and III subunit RPABC1 (210 aa).

The residue at position 1 (Met-1) is an N-acetylmethionine. A Glycyl lysine isopeptide (Lys-Gly) (interchain with G-Cter in SUMO2) cross-link involves residue Lys-81.

Belongs to the archaeal Rpo5/eukaryotic RPB5 RNA polymerase subunit family. Component of the RNA polymerase I (Pol I), RNA polymerase II (Pol II) and RNA polymerase III (Pol III) complexes consisting of at least 13, 12 and 17 subunits, respectively. Pol I complex consists of a ten-subunit catalytic core composed of POLR1A/RPA1, POLR1B/RPA2, POLR1C/RPAC1, POLR1D/RPAC2, POLR1H/RPA12, POLR2E/RPABC1, POLR2F/RPABC2, POLR2H/RPABC3, POLR2K/RPABC4 and POLR2L/RPABC5; a mobile stalk subunit POLR1F/RPA43 protruding from the core and additional subunits homologous to general transcription factors POLR1E/RPA49 and POLR1G/RPA34. Part of Pol I pre-initiation complex (PIC), in which Pol I core assembles with RRN3 and promoter-bound UTBF and SL1/TIF-IB complex. Pol II complex contains a ten-subunit catalytic core composed of POLR2A/RPB1, POLR2B/RPB2, POLR2C/RPB3, POLR2I/RPB9, POLR2J/RPB11, POLR2E/RPABC1, POLR2F/RPABC2, POLR2H/RPABC3, POLR2K/RPABC4 and POLR2L/RPABC5 and a mobile stalk composed of two subunits POLR2D/RPB4 and POLR2G/RPB7. Part of Pol II(G) complex, in which Pol II core associates with an additional subunit POLR2M; unlike conventional Pol II, Pol II(G) functions as a transcriptional repressor. Part of TBP-based Pol II pre-initiation complex (PIC), in which Pol II core assembles with general transcription factors and other specific initiation factors including GTF2E1, GTF2E2, GTF2F1, GTF2F2, TCEA1, ERCC2, ERCC3, GTF2H2, GTF2H3, GTF2H4, GTF2H5, GTF2A1, GTF2A2, GTF2B and TBP; this large multi-subunit PIC complex mediates DNA unwinding and targets Pol II core to the transcription start site where the first phosphodiester bond forms. In Pol II complex, this subunit is present in 2-fold molar excess over the other subunits. Pol III complex consists of a ten-subunit catalytic core composed of POLR3A/RPC1, POLR3B/RPC2, POLR1C/RPAC1, POLR1D/RPAC2, POLR3K/RPC10, POLR2E/RPABC1, POLR2F/RPABC2, POLR2H/RPABC3, POLR2K/RPABC4 and POLR2L/RPABC5; a mobile stalk composed of two subunits POLR3H/RPC8 and CRCP/RPC9, protruding from the core and functioning primarily in transcription initiation; and additional subunits homologous to general transcription factors of the RNA polymerase II machinery, POLR3C/RPC3-POLR3F/RPC6-POLR3G/RPC7 heterotrimer required for transcription initiation and POLR3D/RPC4-POLR3E/RPC5 heterodimer involved in both transcription initiation and termination. Component of the PAQosome complex which is responsible for the biogenesis of several protein complexes and which consists of R2TP complex members RUVBL1, RUVBL2, RPAP3 and PIH1D1, URI complex members PFDN2, PFDN6, PDRG1, UXT and URI1 as well as ASDURF, POLR2E and DNAAF10/WDR92. Interacts with URI1.

Its subcellular location is the nucleus. It is found in the nucleolus. In terms of biological role, DNA-dependent RNA polymerase catalyzes the transcription of DNA into RNA using the four ribonucleoside triphosphates as substrates. Common component of RNA polymerases I, II and III which synthesize ribosomal RNA precursors, mRNA precursors and many functional non-coding RNAs, and small RNAs, such as 5S rRNA and tRNAs, respectively. Pol II is the central component of the basal RNA polymerase II transcription machinery. Pols are composed of mobile elements that move relative to each other. In Pol II, POLR2E/RPABC1 is part of the lower jaw surrounding the central large cleft and thought to grab the incoming DNA template. Seems to be the major component in this process. The sequence is that of DNA-directed RNA polymerases I, II, and III subunit RPABC1 from Mus musculus (Mouse).